Reading from the N-terminus, the 249-residue chain is DNA repair protein RecO (249 aa).

Belongs to the RecO family.

Involved in DNA repair and RecF pathway recombination. The protein is DNA repair protein RecO of Solidesulfovibrio magneticus (strain ATCC 700980 / DSM 13731 / RS-1) (Desulfovibrio magneticus).